A 571-amino-acid chain; its full sequence is MTLSPEDIKIIEKYALQNAVKYGKAPQPKAVMGKVMGECPQLRADPSGVSAALENIVSEIAKGNPEAWEARLSEIAPELIEALSVKKEPDKGLKPLEGAETGKVVMRFAPNPNGPATLGSSRGMVVNSEYVKVYKGKFILRFDDTDPDIKRPMLEAYDWYMDDFKWLGVVPDQVVRASDRFPIYYDYARKLIEMGKAYVCFCKGEDFKRLKDSKKACPHRDTDPEENLMHWEKMLAGEYEDQQAVLRIKTDIEHKDPALRDWGAFRIRKMSHPRPEIGNKYIVWPLLDFAGAIEDHELGMTHIIRGKDLIDSEKRQTYIYKYFGWTYPKTTHWGRVKIHEFGKFSTSTLRKAIESGEYSGWDDPRLPTIRAIRRRGIRAEALKKFMIEMGVGMTDVSISMESLYAENRKIVDPVANRYFFVWNPVELEIEGMKPVVAKVPRHPTDHARGMREISIENKVLVCAEDIEKLNVGSVLRLKDLCNVEITSLSPLRVKRSETSLEDLKKAKGKIIHWVPVDGIPVKVCGPEGDIEGTGERGIETELDNIVQFERFGFCRIDAVDGENVVAYFAHK.

Positions 110 to 120 (PNPNGPATLGS) match the 'HIGH' region motif.

This sequence belongs to the class-I aminoacyl-tRNA synthetase family. Glutamate--tRNA ligase type 2 subfamily.

The protein localises to the cytoplasm. It carries out the reaction tRNA(Glu) + L-glutamate + ATP = L-glutamyl-tRNA(Glu) + AMP + diphosphate. In terms of biological role, catalyzes the attachment of glutamate to tRNA(Glu) in a two-step reaction: glutamate is first activated by ATP to form Glu-AMP and then transferred to the acceptor end of tRNA(Glu). The protein is Glutamate--tRNA ligase of Methanosarcina mazei (strain ATCC BAA-159 / DSM 3647 / Goe1 / Go1 / JCM 11833 / OCM 88) (Methanosarcina frisia).